A 442-amino-acid chain; its full sequence is 26S proteasome non-ATPase regulatory subunit 12 homolog A (442 aa).

Residues 6-137 (KLEATIDRLL…EAADLMQEVA (132 aa)) adopt a coiled-coil conformation. In terms of domain architecture, PCI spans 232-403 (EICRSYKAIY…GIVCFQIAKD (172 aa)).

This sequence belongs to the proteasome subunit p55 family. Component of the 19S regulatory particle (RP/PA700) lid subcomplex of the 26S proteasome. The 26S proteasome is composed of a core protease (CP), known as the 20S proteasome, capped at one or both ends by the 19S regulatory particle (RP/PA700). The RP/PA700 complex is composed of at least 17 different subunits in two subcomplexes, the base and the lid, which form the portions proximal and distal to the 20S proteolytic core, respectively. Ubiquitous with highest expression in flowers.

It is found in the cytoplasm. The protein localises to the nucleus. Acts as a regulatory subunit of the 26 proteasome which is involved in the ATP-dependent degradation of ubiquitinated proteins. Required for gametogenesis and sporophyte development. Acts redundantly with RPN5B. The protein is 26S proteasome non-ATPase regulatory subunit 12 homolog A (RPN5A) of Arabidopsis thaliana (Mouse-ear cress).